The primary structure comprises 256 residues: Acetoacetate decarboxylase 3 (256 aa).

Residue Lys-110 is the Schiff-base intermediate with acetoacetate of the active site.

Belongs to the ADC family.

The enzyme catalyses acetoacetate + H(+) = acetone + CO2. In terms of biological role, catalyzes the conversion of acetoacetate to acetone and carbon dioxide. This Mesorhizobium japonicum (strain LMG 29417 / CECT 9101 / MAFF 303099) (Mesorhizobium loti (strain MAFF 303099)) protein is Acetoacetate decarboxylase 3.